The following is a 20-amino-acid chain: Citrate synthase (20 aa).

It belongs to the citrate synthase family. Homohexamer.

It carries out the reaction oxaloacetate + acetyl-CoA + H2O = citrate + CoA + H(+). Its pathway is carbohydrate metabolism; tricarboxylic acid cycle; isocitrate from oxaloacetate: step 1/2. Its activity is regulated as follows. Allosterically inhibited by NADH. In Streptomyces hygroscopicus, this protein is Citrate synthase (gltA).